The sequence spans 346 residues: Peroxidase 9 (346 aa).

A signal peptide spans 1-23 (MAISKLIPTLVLFVLFSFDVSVA). 4 cysteine pairs are disulfide-bonded: C54-C134, C87-C92, C140-C342, and C219-C251. H85 functions as the Proton acceptor in the catalytic mechanism. Residues D86, V89, G91, D93, and S95 each contribute to the Ca(2+) site. P182 contributes to the substrate binding site. N185 is a glycosylation site (N-linked (GlcNAc...) asparagine). Residue H212 participates in heme b binding. T213 provides a ligand contact to Ca(2+). D264, S267, and D272 together coordinate Ca(2+).

The protein belongs to the peroxidase family. Classical plant (class III) peroxidase subfamily. Requires heme b as cofactor. Ca(2+) is required as a cofactor.

The protein resides in the secreted. It carries out the reaction 2 a phenolic donor + H2O2 = 2 a phenolic radical donor + 2 H2O. Functionally, removal of H(2)O(2), oxidation of toxic reductants, biosynthesis and degradation of lignin, suberization, auxin catabolism, response to environmental stresses such as wounding, pathogen attack and oxidative stress. These functions might be dependent on each isozyme/isoform in each plant tissue. The polypeptide is Peroxidase 9 (PER9) (Arabidopsis thaliana (Mouse-ear cress)).